The sequence spans 227 residues: MAHPFQTGLQDATSPIMEELLHFHDHTLMIVFLISSLVLYIISIMLTTKLTHTNTMDAQEVETVWTILPAIILIMIALPSLRILYMMDEINNPSLTVKTMGHQWYWSYEYTDYEDLSFDSYMTPTQELKPGELRLLEVDNRVVLPMEMTIRMLISSEDVLHSWAVPSLGLKTDAIPGRLNQTTLMAMRPGLYYGQCSEICGSNHSFMPIVLEMVPLSYFEKWSASML.

The Mitochondrial intermembrane segment spans residues 1 to 14; it reads MAHPFQTGLQDATS. A helical transmembrane segment spans residues 15-45; the sequence is PIMEELLHFHDHTLMIVFLISSLVLYIISIM. Residues 46–59 are Mitochondrial matrix-facing; that stretch reads LTTKLTHTNTMDAQ. The chain crosses the membrane as a helical span at residues 60-87; the sequence is EVETVWTILPAIILIMIALPSLRILYMM. At 88–227 the chain is on the mitochondrial intermembrane side; sequence DEINNPSLTV…YFEKWSASML (140 aa). Positions 161, 196, 198, 200, 204, and 207 each coordinate Cu cation. Residue glutamate 198 coordinates Mg(2+). Tyrosine 218 is subject to Phosphotyrosine.

It belongs to the cytochrome c oxidase subunit 2 family. In terms of assembly, component of the cytochrome c oxidase (complex IV, CIV), a multisubunit enzyme composed of 14 subunits. The complex is composed of a catalytic core of 3 subunits MT-CO1, MT-CO2 and MT-CO3, encoded in the mitochondrial DNA, and 11 supernumerary subunits COX4I, COX5A, COX5B, COX6A, COX6B, COX6C, COX7A, COX7B, COX7C, COX8 and NDUFA4, which are encoded in the nuclear genome. The complex exists as a monomer or a dimer and forms supercomplexes (SCs) in the inner mitochondrial membrane with NADH-ubiquinone oxidoreductase (complex I, CI) and ubiquinol-cytochrome c oxidoreductase (cytochrome b-c1 complex, complex III, CIII), resulting in different assemblies (supercomplex SCI(1)III(2)IV(1) and megacomplex MCI(2)III(2)IV(2)). Found in a complex with TMEM177, COA6, COX18, COX20, SCO1 and SCO2. Interacts with TMEM177 in a COX20-dependent manner. Interacts with COX20. Interacts with COX16. The cofactor is Cu cation.

It localises to the mitochondrion inner membrane. The catalysed reaction is 4 Fe(II)-[cytochrome c] + O2 + 8 H(+)(in) = 4 Fe(III)-[cytochrome c] + 2 H2O + 4 H(+)(out). In terms of biological role, component of the cytochrome c oxidase, the last enzyme in the mitochondrial electron transport chain which drives oxidative phosphorylation. The respiratory chain contains 3 multisubunit complexes succinate dehydrogenase (complex II, CII), ubiquinol-cytochrome c oxidoreductase (cytochrome b-c1 complex, complex III, CIII) and cytochrome c oxidase (complex IV, CIV), that cooperate to transfer electrons derived from NADH and succinate to molecular oxygen, creating an electrochemical gradient over the inner membrane that drives transmembrane transport and the ATP synthase. Cytochrome c oxidase is the component of the respiratory chain that catalyzes the reduction of oxygen to water. Electrons originating from reduced cytochrome c in the intermembrane space (IMS) are transferred via the dinuclear copper A center (CU(A)) of subunit 2 and heme A of subunit 1 to the active site in subunit 1, a binuclear center (BNC) formed by heme A3 and copper B (CU(B)). The BNC reduces molecular oxygen to 2 water molecules using 4 electrons from cytochrome c in the IMS and 4 protons from the mitochondrial matrix. The polypeptide is Cytochrome c oxidase subunit 2 (MT-CO2) (Ailuropoda melanoleuca (Giant panda)).